Consider the following 348-residue polypeptide: MSNDWIFGACAVPDARMRSAALARQEQLTKPPGALGRLEQLAVQVAAWQRTEHPAVQRVWIAVYAADHGVAAEGVSAFPQAVTGEMVRNFARGGAAIAVLARELGARLEVVNLGVVNDPGDLSRVRRAWIAPSTANICEQPAMTATQLRDALAAGAHSIAQAKSCDTQLFVGGEMGIGNTTAAAALGCALLSQFPQALAGAGTGLDAEGIAHKVTVITRALALHADASTPLERLRRLGGFEIAALVGAYIAAAQAGIPVLVDGFIATAAALVATRLNPGVREWLLFGHRSQERGHAALLRALDAEPLLQLDLRLGEASGAAVAIPLLRSACALHNGMATFAEAGVSDA.

E316 functions as the Proton acceptor in the catalytic mechanism.

Belongs to the CobT family.

The enzyme catalyses 5,6-dimethylbenzimidazole + nicotinate beta-D-ribonucleotide = alpha-ribazole 5'-phosphate + nicotinate + H(+). It functions in the pathway nucleoside biosynthesis; alpha-ribazole biosynthesis; alpha-ribazole from 5,6-dimethylbenzimidazole: step 1/2. Its function is as follows. Catalyzes the synthesis of alpha-ribazole-5'-phosphate from nicotinate mononucleotide (NAMN) and 5,6-dimethylbenzimidazole (DMB). This Xanthomonas oryzae pv. oryzae (strain PXO99A) protein is Nicotinate-nucleotide--dimethylbenzimidazole phosphoribosyltransferase.